Here is a 61-residue protein sequence, read N- to C-terminus: Large ribosomal subunit protein uL30 (61 aa).

Residues 1-20 are disordered; it reads MSQKKVTVRQVGSPIGRKPE.

Belongs to the universal ribosomal protein uL30 family. Part of the 50S ribosomal subunit.

The polypeptide is Large ribosomal subunit protein uL30 (Hyphomonas neptunium (strain ATCC 15444)).